The chain runs to 607 residues: Pyruvate decarboxylase 2 (607 aa).

Positions 1-22 (MDTKIGSIDACNPTNHDIGGPP) are disordered. Residues aspartate 69 and histidine 156 each contribute to the substrate site. Residues 434 to 516 (DSWFNCQKLK…FLINNGGYTI (83 aa)) are thiamine pyrophosphate binding. Residues aspartate 484, asparagine 511, and glycine 513 each contribute to the Mg(2+) site. Glutamate 517 contacts substrate.

Belongs to the TPP enzyme family. Homotetramer. It depends on a metal cation as a cofactor. Requires thiamine diphosphate as cofactor. As to expression, expressed at low levels in roots, shoots, flowers, siliques and seeds.

It catalyses the reaction a 2-oxocarboxylate + H(+) = an aldehyde + CO2. This is Pyruvate decarboxylase 2 (PDC2) from Arabidopsis thaliana (Mouse-ear cress).